We begin with the raw amino-acid sequence, 658 residues long: Pentatricopeptide repeat-containing protein At1g69290 (658 aa).

Disordered stretches follow at residues 1-23 and 39-61; these read MFRKTLNSISRRHFSSSSPESPS and TLSPSLSPPQNPKTLTPDQKSSF. The segment covering 50-61 has biased composition (polar residues); sequence PKTLTPDQKSSF. PPR repeat units lie at residues 214-249, 250-284, 285-320, 323-353, 361-395, 397-431, 432-466, 467-497, 503-537, 538-568, and 581-615; these read DLVASNAALEACCRQMESLADAENVIESMAVLGVKP, DELSFGFLAYLYARKGLREKISELENLMDGFGFAS, RRILYSNMISGYVKSGDLDSVSDVILHSLKEGGEES, SVETYCELVKGFIESKSVKSLAKVILEAQKL, DSSVGFGIINACVNLGFSDKAHSILEEMIAQGGGS, GIGVYVPILKAYCKEYRTAEATQLVTEISSSGLQL, DVEISNALIEASMTNQDFISAFTLFRDMRENRVVD, LKGSYLTIMTGLLENQRPELMAAFLDEVVED, NSHDWNSIIHAFCKSGRLEDARRTFRRMVFLRYEP, NNQTYLSLINGYVSGEKYFNVLLLWNEIKGK, and DHALVDAFLYALVKGGFFDAAMQVVEKSQEMKIFV.

It belongs to the PPR family. P subfamily.

The protein is Pentatricopeptide repeat-containing protein At1g69290 of Arabidopsis thaliana (Mouse-ear cress).